Consider the following 421-residue polypeptide: Probable N-acetylgalactosaminyltransferase 8 (421 aa).

Residues 1-3 lie on the Cytoplasmic side of the membrane; it reads MRR. Residues 4 to 24 form a helical; Signal-anchor for type II membrane protein membrane-spanning segment; the sequence is HVVLSIFVFAGIVFAAEEAEK. The Lumenal portion of the chain corresponds to 25 to 421; that stretch reads LPKCEHVDPY…ELEPKVHDEL (397 aa). Asn-52 and Asn-58 each carry an N-linked (GlcNAc...) asparagine glycan. Intrachain disulfides connect Cys-98-Cys-331 and Cys-322-Cys-399. The segment at 106-219 is catalytic subdomain A; the sequence is SYSTSVVVIH…ERWLEPLLQP (114 aa). Substrate contacts are provided by Asp-147 and Arg-180. A Mn(2+)-binding site is contributed by Asp-203. Ser-204 serves as a coordination point for substrate. His-205 provides a ligand contact to Mn(2+). Residues 277 to 339 are catalytic subdomain B; the sequence is PFNSPAMPGG…PCSRVGHVFR (63 aa). Trp-308 lines the substrate pocket. His-336 is a Mn(2+) binding site. Substrate-binding residues include Arg-339 and Tyr-344. Residues 418–421 carry the Prevents secretion from ER motif; the sequence is HDEL.

This sequence belongs to the glycosyltransferase 2 family. GalNAc-T subfamily. The cofactor is Mn(2+).

It is found in the golgi apparatus membrane. The protein operates within protein modification; protein glycosylation. Functionally, potential glycopeptide transferase involved in O-linked oligosaccharide biosynthesis. In contrast to other members of the family, it does not act as a peptide transferase that transfers GalNAc onto serine or threonine residue on peptides that have been tested. Some peptide transferase activity is however not excluded, considering that its appropriate peptide substrate may remain unidentified. This Caenorhabditis elegans protein is Probable N-acetylgalactosaminyltransferase 8 (gly-8).